The primary structure comprises 310 residues: Glutaminase (310 aa).

Substrate-binding residues include Ser66, Asn117, Glu161, Asn168, Tyr192, Tyr244, and Val262. Position 294 is an N6-acetyllysine (Lys294).

The protein belongs to the glutaminase family. Homotetramer.

The enzyme catalyses L-glutamine + H2O = L-glutamate + NH4(+). The chain is Glutaminase from Escherichia coli O81 (strain ED1a).